An 85-amino-acid polypeptide reads, in one-letter code: Putative sodium channel toxin Ts37 (85 aa).

The first 20 residues, 1 to 20 (MAGEWACLLVSLVLLWGAAG), serve as a signal peptide directing secretion. The 62-residue stretch at 22 to 83 (RDGFLLDRNF…KIWGDSVRCR (62 aa)) folds into the LCN-type CS-alpha/beta domain. Disulfide bonds link Cys32-Cys82, Cys36-Cys59, Cys45-Cys64, and Cys49-Cys66.

The protein belongs to the long (4 C-C) scorpion toxin superfamily. Sodium channel inhibitor family. As to expression, expressed by the venom gland.

It localises to the secreted. Its function is as follows. Putative sodium channel toxin. The sequence is that of Putative sodium channel toxin Ts37 from Tityus serrulatus (Brazilian scorpion).